Consider the following 420-residue polypeptide: Diaminobutyrate--2-oxoglutarate transaminase (420 aa).

An N6-(pyridoxal phosphate)lysine modification is found at Lys-271.

The protein belongs to the class-III pyridoxal-phosphate-dependent aminotransferase family. Requires pyridoxal 5'-phosphate as cofactor.

It catalyses the reaction L-2,4-diaminobutanoate + 2-oxoglutarate = L-aspartate 4-semialdehyde + L-glutamate. Its pathway is amine and polyamine biosynthesis; ectoine biosynthesis; L-ectoine from L-aspartate 4-semialdehyde: step 1/3. In terms of biological role, catalyzes reversively the conversion of L-aspartate beta-semialdehyde (ASA) to L-2,4-diaminobutyrate (DABA) by transamination with L-glutamate. This is Diaminobutyrate--2-oxoglutarate transaminase (ectB) from Streptomyces anulatus (Streptomyces chrysomallus).